We begin with the raw amino-acid sequence, 432 residues long: FMRFamide peptide receptor frpr-18 (432 aa).

Residues 1–8 lie on the Extracellular side of the membrane; that stretch reads MESQQLMA. The chain crosses the membrane as a helical span at residues 9 to 29; that stretch reads CAILVIVLVGIFGNSLSFILF. The Cytoplasmic segment spans residues 30 to 42; the sequence is SRPHMRSSSVNVL. Residues 43–63 traverse the membrane as a helical segment; the sequence is LCALSFFDFSLLTLSIPIFVI. The Extracellular segment spans residues 64-84; sequence PNLDLWANDLSLSTYMAYILK. Residues 85–105 form a helical membrane-spanning segment; that stretch reads LIYPINLMMQTCSVYIMVMIT. Residues 106 to 128 lie on the Cytoplasmic side of the membrane; the sequence is LERWVAVCRPLQVRVWCTPRKSR. The helical transmembrane segment at 129-149 threads the bilayer; the sequence is NAILVIIVSAFLYNFVRFFEY. Residues 150 to 176 lie on the Extracellular side of the membrane; the sequence is RFVVTESGALYEKWLRDPGKHRWYYVG. Residues 177–197 form a helical membrane-spanning segment; that stretch reads YYTILYIVTHFLVPFSVMAFA. The Cytoplasmic portion of the chain corresponds to 198-225; that stretch reads NGHVIVAMCKLSKTRQMLTRQQQREQST. A helical transmembrane segment spans residues 226 to 246; that stretch reads TVMLLIVTFVFAICNTLPFLL. Residues 247 to 271 are Extracellular-facing; the sequence is NVSESIFPTLFQDESTRGLAYWLND. The helical transmembrane segment at 272–292 threads the bilayer; it reads LSNLLVVLNSGTTFIIYFTFS. The Cytoplasmic segment spans residues 293–432; it reads EKYRQTLVFI…GEPDSPCQPC (140 aa). Disordered regions lie at residues 328–349 and 388–411; these read ISSE…SSRS and KLPS…GMPE.

Belongs to the G-protein coupled receptor 1 family. Expressed in a subset of neurons in the head, midbody, and tail, including AIY, ASI, BAG, URA, CAN, I6, PVQ, DVA, RIM, and VC, and in the anal sphincter and intestinal muscles. Expression from the ASI neurons is involved in promoting arousal.

The protein localises to the cell membrane. Its function is as follows. G-protein coupled receptor for flp-2 neuropeptides. May act through the G(q) alpha type of G proteins. Involved in mediating arousal from the sleep-like state called lethargus, which occurs during molting between larval and adult stages, in part by regulating touch sensitivity, and working in concert with neuropeptide pdf-1. The protein is FMRFamide peptide receptor frpr-18 of Caenorhabditis elegans.